The primary structure comprises 291 residues: Glycine--tRNA ligase alpha subunit (291 aa).

Belongs to the class-II aminoacyl-tRNA synthetase family. Tetramer of two alpha and two beta subunits.

Its subcellular location is the cytoplasm. The enzyme catalyses tRNA(Gly) + glycine + ATP = glycyl-tRNA(Gly) + AMP + diphosphate. The chain is Glycine--tRNA ligase alpha subunit from Trichlorobacter lovleyi (strain ATCC BAA-1151 / DSM 17278 / SZ) (Geobacter lovleyi).